A 223-amino-acid chain; its full sequence is Ribonuclease 3 (223 aa).

Positions 1–131 (MDGVDELLLR…LIGAVMVDQG (131 aa)) constitute an RNase III domain. Glutamate 44 lines the Mg(2+) pocket. Aspartate 48 is a catalytic residue. 2 residues coordinate Mg(2+): aspartate 117 and glutamate 120. Residue glutamate 120 is part of the active site. In terms of domain architecture, DRBM spans 157–220 (DPKTKLQKLT…AMSALASLEN (64 aa)).

The protein belongs to the ribonuclease III family. Homodimer. The cofactor is Mg(2+).

It is found in the cytoplasm. It carries out the reaction Endonucleolytic cleavage to 5'-phosphomonoester.. Its function is as follows. Digests double-stranded RNA. Involved in the processing of primary rRNA transcript to yield the immediate precursors to the large and small rRNAs (23S and 16S). Processes some mRNAs, and tRNAs when they are encoded in the rRNA operon. Processes pre-crRNA and tracrRNA of type II CRISPR loci if present in the organism. This is Ribonuclease 3 from Tropheryma whipplei (strain Twist) (Whipple's bacillus).